Consider the following 353-residue polypeptide: Photosystem II D2 protein (353 aa).

An N-acetylthreonine modification is found at threonine 2. A Phosphothreonine modification is found at threonine 2. Residues 41-61 (CAYFALGGWFTGTTFVTSWYT) traverse the membrane as a helical segment. Position 118 (histidine 118) interacts with chlorophyll a. Residues 125 to 141 (GFMLRQFELARSVQLRP) form a helical membrane-spanning segment. Residues glutamine 130 and asparagine 143 each contribute to the pheophytin a site. Residues 153-166 (VFVSVFLIYPLGQS) form a helical membrane-spanning segment. Histidine 198 is a binding site for chlorophyll a. A helical transmembrane segment spans residues 208-228 (AALLCAIHGATVENTLFEDGD). A plastoquinone-binding residues include histidine 215 and phenylalanine 262. Histidine 215 is a binding site for Fe cation. Residue histidine 269 participates in Fe cation binding. The helical transmembrane segment at 279-295 (GLWMSALGVVGLALNLR) threads the bilayer.

The protein belongs to the reaction center PufL/M/PsbA/D family. As to quaternary structure, PSII is composed of 1 copy each of membrane proteins PsbA, PsbB, PsbC, PsbD, PsbE, PsbF, PsbH, PsbI, PsbJ, PsbK, PsbL, PsbM, PsbT, PsbX, PsbY, PsbZ, Psb30/Ycf12, at least 3 peripheral proteins of the oxygen-evolving complex and a large number of cofactors. It forms dimeric complexes. The D1/D2 heterodimer binds P680, chlorophylls that are the primary electron donor of PSII, and subsequent electron acceptors. It shares a non-heme iron and each subunit binds pheophytin, quinone, additional chlorophylls, carotenoids and lipids. There is also a Cl(-1) ion associated with D1 and D2, which is required for oxygen evolution. The PSII complex binds additional chlorophylls, carotenoids and specific lipids. serves as cofactor.

The protein resides in the plastid. The protein localises to the chloroplast thylakoid membrane. It carries out the reaction 2 a plastoquinone + 4 hnu + 2 H2O = 2 a plastoquinol + O2. In terms of biological role, photosystem II (PSII) is a light-driven water:plastoquinone oxidoreductase that uses light energy to abstract electrons from H(2)O, generating O(2) and a proton gradient subsequently used for ATP formation. It consists of a core antenna complex that captures photons, and an electron transfer chain that converts photonic excitation into a charge separation. The D1/D2 (PsbA/PsbD) reaction center heterodimer binds P680, the primary electron donor of PSII as well as several subsequent electron acceptors. D2 is needed for assembly of a stable PSII complex. In Platanus occidentalis (Sycamore), this protein is Photosystem II D2 protein.